Reading from the N-terminus, the 79-residue chain is MORN repeat-containing protein 2 (79 aa).

MORN repeat units lie at residues 15–37 (YEGH…NGAK) and 38–60 (YTGN…QGLE).

The polypeptide is MORN repeat-containing protein 2 (MORN2) (Bos taurus (Bovine)).